The sequence spans 449 residues: Nuclear hormone receptor family member nhr-43 (449 aa).

Positions 44–122 form a DNA-binding region, nuclear receptor; it reads NIHCRVCERR…VGLNVDAVVG (79 aa). 2 consecutive NR C4-type zinc fingers follow at residues 47–68 and 84–105; these read CRVCERRYDGSQHFGIDICRAC and CRRGTNKCELNTVSRKTTCQKC. Basic and acidic residues predominate over residues 125–142; the sequence is SPDHVKTTSRDESVKKED. A disordered region spans residues 125-154; sequence SPDHVKTTSRDESVKKEDEESDTGSEGKSC. In terms of domain architecture, NR LBD spans 200–449; it reads NYNEFTKSRL…SDLNAYLYSI (250 aa).

The protein resides in the nucleus. Ligand-activated transcription factor. Positively modulates expression of homeobox protein lin-39, perhaps by binding to the sequence motif 5'-TGAC-3' in regulatory regions of the lin-39 gene, acting in the embryo, and also in the vulval lineage. The polypeptide is Nuclear hormone receptor family member nhr-43 (Caenorhabditis elegans).